Here is a 330-residue protein sequence, read N- to C-terminus: MARMYYDADANLDLLNGKTVAIIGYGSQGHAHALNLRDSGVNVVVGLYPGSKSAAKAEAEGLKVLPVAEAAQAADWIMILLPDEFQKSVFENEIRPALSAGKVLAFAHGFNIHFAQIVPPADVDVVMIAPKSPGHLVRRTYEQGQGVPCLFAIYQDASGQARDRAMAYAKGIGGTRAGILETSFREETETDLFGEQAVLCGGLSALIKAGFETLVEAGYQPELAYFECLHEVKLIVDLIVEGGLAAMRDSISNTAEYGDYVTGPRLITEETKAEMKRVLADIQQGRFALDFVQECGAGKPVMTATRRLEAEHPIESVGKDLRAMFSWLKK.

Residues 2–182 enclose the KARI N-terminal Rossmann domain; the sequence is ARMYYDADAN…GGTRAGILET (181 aa). NADP(+)-binding positions include 25-28, Ser51, Ser53, and 83-86; these read YGSQ and DEFQ. The active site involves His108. Gly134 contributes to the NADP(+) binding site. Positions 183 to 328 constitute a KARI C-terminal knotted domain; the sequence is SFREETETDL…KDLRAMFSWL (146 aa). 4 residues coordinate Mg(2+): Asp191, Glu195, Glu227, and Glu231. Ser252 contacts substrate.

This sequence belongs to the ketol-acid reductoisomerase family. It depends on Mg(2+) as a cofactor.

The enzyme catalyses (2R)-2,3-dihydroxy-3-methylbutanoate + NADP(+) = (2S)-2-acetolactate + NADPH + H(+). It catalyses the reaction (2R,3R)-2,3-dihydroxy-3-methylpentanoate + NADP(+) = (S)-2-ethyl-2-hydroxy-3-oxobutanoate + NADPH + H(+). It participates in amino-acid biosynthesis; L-isoleucine biosynthesis; L-isoleucine from 2-oxobutanoate: step 2/4. It functions in the pathway amino-acid biosynthesis; L-valine biosynthesis; L-valine from pyruvate: step 2/4. In terms of biological role, involved in the biosynthesis of branched-chain amino acids (BCAA). Catalyzes an alkyl-migration followed by a ketol-acid reduction of (S)-2-acetolactate (S2AL) to yield (R)-2,3-dihydroxy-isovalerate. In the isomerase reaction, S2AL is rearranged via a Mg-dependent methyl migration to produce 3-hydroxy-3-methyl-2-ketobutyrate (HMKB). In the reductase reaction, this 2-ketoacid undergoes a metal-dependent reduction by NADPH to yield (R)-2,3-dihydroxy-isovalerate. The polypeptide is Ketol-acid reductoisomerase (NADP(+)) (Synechococcus elongatus (strain ATCC 33912 / PCC 7942 / FACHB-805) (Anacystis nidulans R2)).